Here is an 86-residue protein sequence, read N- to C-terminus: Neurotoxin-like protein NTL2 (86 aa).

Positions 1-21 (MKTLLLSLVVVTIVCLDLGYT) are cleaved as a signal peptide. Intrachain disulfides connect cysteine 24–cysteine 45, cysteine 38–cysteine 63, cysteine 67–cysteine 78, and cysteine 79–cysteine 84.

This sequence belongs to the three-finger toxin family. Short-chain subfamily. Orphan group I sub-subfamily. In terms of tissue distribution, expressed by the venom gland.

The protein resides in the secreted. This Naja atra (Chinese cobra) protein is Neurotoxin-like protein NTL2.